The primary structure comprises 381 residues: Dual-specificity RNA methyltransferase RlmN (381 aa).

E96 acts as the Proton acceptor in catalysis. Residues 102–342 (TDDRGTLCVS…TRTTRGDDID (241 aa)) enclose the Radical SAM core domain. C109 and C345 are oxidised to a cystine. Residues C116, C120, and C123 each coordinate [4Fe-4S] cluster. Residues 170–171 (GE), S202, 224–226 (SLH), and N302 contribute to the S-adenosyl-L-methionine site. The active-site S-methylcysteine intermediate is the C345.

The protein belongs to the radical SAM superfamily. RlmN family. Requires [4Fe-4S] cluster as cofactor.

Its subcellular location is the cytoplasm. It carries out the reaction adenosine(2503) in 23S rRNA + 2 reduced [2Fe-2S]-[ferredoxin] + 2 S-adenosyl-L-methionine = 2-methyladenosine(2503) in 23S rRNA + 5'-deoxyadenosine + L-methionine + 2 oxidized [2Fe-2S]-[ferredoxin] + S-adenosyl-L-homocysteine. It catalyses the reaction adenosine(37) in tRNA + 2 reduced [2Fe-2S]-[ferredoxin] + 2 S-adenosyl-L-methionine = 2-methyladenosine(37) in tRNA + 5'-deoxyadenosine + L-methionine + 2 oxidized [2Fe-2S]-[ferredoxin] + S-adenosyl-L-homocysteine. In terms of biological role, specifically methylates position 2 of adenine 2503 in 23S rRNA and position 2 of adenine 37 in tRNAs. m2A2503 modification seems to play a crucial role in the proofreading step occurring at the peptidyl transferase center and thus would serve to optimize ribosomal fidelity. The chain is Dual-specificity RNA methyltransferase RlmN from Pseudomonas putida (strain ATCC 700007 / DSM 6899 / JCM 31910 / BCRC 17059 / LMG 24140 / F1).